The following is a 353-amino-acid chain: UPF0283 membrane protein YPA_1696 (353 aa).

3 helical membrane-spanning segments follow: residues 71–91, 101–121, and 214–234; these read MVTA…VQWV, IALG…GSVV, and ESAL…FIAW.

The protein belongs to the UPF0283 family.

The protein resides in the cell inner membrane. This chain is UPF0283 membrane protein YPA_1696, found in Yersinia pestis bv. Antiqua (strain Antiqua).